Here is a 253-residue protein sequence, read N- to C-terminus: tRNA (guanine-N(1)-)-methyltransferase (253 aa).

Residues Gly-113 and 133–138 (IGDYVL) each bind S-adenosyl-L-methionine.

It belongs to the RNA methyltransferase TrmD family. Homodimer.

The protein localises to the cytoplasm. The enzyme catalyses guanosine(37) in tRNA + S-adenosyl-L-methionine = N(1)-methylguanosine(37) in tRNA + S-adenosyl-L-homocysteine + H(+). Its function is as follows. Specifically methylates guanosine-37 in various tRNAs. This is tRNA (guanine-N(1)-)-methyltransferase from Chloroflexus aurantiacus (strain ATCC 29366 / DSM 635 / J-10-fl).